Reading from the N-terminus, the 497-residue chain is Cytochrome P450 98A8 (497 aa).

The helical transmembrane segment at isoleucine 2–tyrosine 19 threads the bilayer. Cysteine 431 contributes to the heme binding site.

This sequence belongs to the cytochrome P450 family. It depends on heme as a cofactor. As to expression, strongly expressed in inflorescence tips, young flower buds, seeds, stamen, tapetum and pollen.

The protein resides in the membrane. Acts redundantly with CYP98A9 as tricoumaroylspermidine meta-hydroxylase. Also catalyzes the meta-hydroxylation of the three triferuloylspermidine phenolic rings. Unable to use 5-O-(4-coumaroyl) D-quinate or 5-O-(4-coumaroyl) shikimate as substrates. The chain is Cytochrome P450 98A8 (CYP98A8) from Arabidopsis thaliana (Mouse-ear cress).